The following is a 36-amino-acid chain: Hemoglobin subunit beta (36 aa).

Residues 1–36 (VCVLAHHFGKEFTPQVQAAYQKVVAGVANALAHKYH) enclose the Globin domain. Residue lysine 34 is modified to N6-acetyllysine.

It belongs to the globin family. As to quaternary structure, heterotetramer of two alpha chains and two beta chains. Red blood cells.

In terms of biological role, involved in oxygen transport from the lung to the various peripheral tissues. This is Hemoglobin subunit beta (HBB) from Pongo pygmaeus (Bornean orangutan).